Consider the following 474-residue polypeptide: tRNA-2-methylthio-N(6)-dimethylallyladenosine synthase (474 aa).

An MTTase N-terminal domain is found at 3 to 120 (KKLLIKTWGC…LPEMIKQSQS (118 aa)). [4Fe-4S] cluster contacts are provided by Cys12, Cys49, Cys83, Cys157, Cys161, and Cys164. The region spanning 143–375 (RAEGATAFVS…QQQINAQAMR (233 aa)) is the Radical SAM core domain. The 64-residue stretch at 378–441 (RLMLGTEQRV…ANSLRGEIVR (64 aa)) folds into the TRAM domain.

It belongs to the methylthiotransferase family. MiaB subfamily. Monomer. Requires [4Fe-4S] cluster as cofactor.

It is found in the cytoplasm. It catalyses the reaction N(6)-dimethylallyladenosine(37) in tRNA + (sulfur carrier)-SH + AH2 + 2 S-adenosyl-L-methionine = 2-methylsulfanyl-N(6)-dimethylallyladenosine(37) in tRNA + (sulfur carrier)-H + 5'-deoxyadenosine + L-methionine + A + S-adenosyl-L-homocysteine + 2 H(+). In terms of biological role, catalyzes the methylthiolation of N6-(dimethylallyl)adenosine (i(6)A), leading to the formation of 2-methylthio-N6-(dimethylallyl)adenosine (ms(2)i(6)A) at position 37 in tRNAs that read codons beginning with uridine. This is tRNA-2-methylthio-N(6)-dimethylallyladenosine synthase from Vibrio vulnificus (strain CMCP6).